Reading from the N-terminus, the 632-residue chain is 1-deoxy-D-xylulose-5-phosphate synthase (632 aa).

Residues 1 to 25 form a disordered region; the sequence is MPTTFHEIPRKRPTTPLLDRANTPD. Residues histidine 87 and 128-130 each bind thiamine diphosphate; that span reads GHS. Residue aspartate 159 coordinates Mg(2+). Thiamine diphosphate is bound by residues 160-161, asparagine 188, phenylalanine 295, and glutamate 378; that span reads GA. Residue asparagine 188 participates in Mg(2+) binding.

It belongs to the transketolase family. DXPS subfamily. In terms of assembly, homodimer. The cofactor is Mg(2+). Thiamine diphosphate serves as cofactor.

It catalyses the reaction D-glyceraldehyde 3-phosphate + pyruvate + H(+) = 1-deoxy-D-xylulose 5-phosphate + CO2. The protein operates within metabolic intermediate biosynthesis; 1-deoxy-D-xylulose 5-phosphate biosynthesis; 1-deoxy-D-xylulose 5-phosphate from D-glyceraldehyde 3-phosphate and pyruvate: step 1/1. Catalyzes the acyloin condensation reaction between C atoms 2 and 3 of pyruvate and glyceraldehyde 3-phosphate to yield 1-deoxy-D-xylulose-5-phosphate (DXP). The chain is 1-deoxy-D-xylulose-5-phosphate synthase from Pseudomonas fluorescens (strain Pf0-1).